Consider the following 569-residue polypeptide: Urease subunit alpha (569 aa).

Ni(2+) contacts are provided by histidine 136, histidine 138, and lysine 219. Residue lysine 219 is modified to N6-carboxylysine. Residue histidine 221 coordinates substrate. The Ni(2+) site is built by histidine 248 and histidine 274. The active-site Proton donor is histidine 322. Aspartate 362 serves as a coordination point for Ni(2+).

Belongs to the metallo-dependent hydrolases superfamily. Urease alpha subunit family. In terms of assembly, heterotrimer of UreA (gamma), UreB (beta) and UreC (alpha) subunits. Three heterotrimers associate to form the active enzyme. The cofactor is Ni cation. In terms of processing, carboxylation allows a single lysine to coordinate two nickel ions.

The protein resides in the cytoplasm. The catalysed reaction is urea + 2 H2O + H(+) = hydrogencarbonate + 2 NH4(+). Its pathway is nitrogen metabolism; urea degradation; CO(2) and NH(3) from urea (urease route): step 1/1. The protein is Urease subunit alpha of Dinoroseobacter shibae (strain DSM 16493 / NCIMB 14021 / DFL 12).